The chain runs to 352 residues: Histidinol-phosphate aminotransferase 1 (352 aa).

K211 carries the N6-(pyridoxal phosphate)lysine modification.

The protein belongs to the class-II pyridoxal-phosphate-dependent aminotransferase family. Histidinol-phosphate aminotransferase subfamily. In terms of assembly, homodimer. Requires pyridoxal 5'-phosphate as cofactor.

The catalysed reaction is L-histidinol phosphate + 2-oxoglutarate = 3-(imidazol-4-yl)-2-oxopropyl phosphate + L-glutamate. The protein operates within amino-acid biosynthesis; L-histidine biosynthesis; L-histidine from 5-phospho-alpha-D-ribose 1-diphosphate: step 7/9. The chain is Histidinol-phosphate aminotransferase 1 from Haemophilus influenzae (strain 86-028NP).